A 161-amino-acid polypeptide reads, in one-letter code: Cytochrome c-type biogenesis protein CcmE (161 aa).

Residues 1-8 (MNPRRKKR) lie on the Cytoplasmic side of the membrane. The chain crosses the membrane as a helical; Signal-anchor for type II membrane protein span at residues 9–29 (LGLILALFVGISATVGLMLYA). Residues 30–161 (LNQNMDLFYT…TEQQKQGTGQ (132 aa)) lie on the Periplasmic side of the membrane. The heme site is built by histidine 129 and tyrosine 133. Positions 142-161 (MKKTHEPLQYTEQQKQGTGQ) are disordered. The segment covering 151-161 (YTEQQKQGTGQ) has biased composition (polar residues).

This sequence belongs to the CcmE/CycJ family.

The protein localises to the cell inner membrane. Its function is as follows. Heme chaperone required for the biogenesis of c-type cytochromes. Transiently binds heme delivered by CcmC and transfers the heme to apo-cytochromes in a process facilitated by CcmF and CcmH. The polypeptide is Cytochrome c-type biogenesis protein CcmE (Aliivibrio fischeri (strain MJ11) (Vibrio fischeri)).